The chain runs to 349 residues: Small ribosomal subunit biogenesis GTPase RsgA (349 aa).

Residues 1 to 11 (MSKKKLSKGQQ) show a composition bias toward basic residues. Positions 1-29 (MSKKKLSKGQQRRVSANHQRRLKKTESKV) are disordered. One can recognise a CP-type G domain in the interval 102 to 272 (HSVLTRPDYY…VIDSPGVREF (171 aa)). Residues 158-161 (NKID) and 212-220 (GQSGVGKSS) each bind GTP. Residues Cys-296, Cys-301, His-303, and Cys-309 each coordinate Zn(2+).

The protein belongs to the TRAFAC class YlqF/YawG GTPase family. RsgA subfamily. In terms of assembly, monomer. Associates with 30S ribosomal subunit, binds 16S rRNA. Zn(2+) serves as cofactor.

It is found in the cytoplasm. One of several proteins that assist in the late maturation steps of the functional core of the 30S ribosomal subunit. Helps release RbfA from mature subunits. May play a role in the assembly of ribosomal proteins into the subunit. Circularly permuted GTPase that catalyzes slow GTP hydrolysis, GTPase activity is stimulated by the 30S ribosomal subunit. The sequence is that of Small ribosomal subunit biogenesis GTPase RsgA from Pectobacterium atrosepticum (strain SCRI 1043 / ATCC BAA-672) (Erwinia carotovora subsp. atroseptica).